A 69-amino-acid polypeptide reads, in one-letter code: Antimicrobial peptide Eval36 (69 aa).

The first 23 residues, 1–23, serve as a signal peptide directing secretion; the sequence is MKAQFAILVISMMLLQLIVQTES. Residue leucine 37 is modified to Leucine amide. A propeptide spanning residues 38–69 is cleaved from the precursor; the sequence is GKRGLRNLDDFQDFLDSDTSDADLRMLRDMFR.

The protein belongs to the non-disulfide-bridged peptide (NDBP) superfamily. Short antimicrobial peptide (group 4) family. As to expression, expressed by the venom gland.

It is found in the secreted. Functionally, probable antimicrobial peptide. Shows low inhibitory activity against herpes simplex virus type 1 (HSV-1). The sequence is that of Antimicrobial peptide Eval36 from Euscorpiops validus (Scorpion).